The following is a 429-amino-acid chain: Ribosomal RNA small subunit methyltransferase B (429 aa).

S-adenosyl-L-methionine is bound by residues 254–260 (CAAPGGK), Asp277, Asp303, and Asp322. Catalysis depends on Cys375, which acts as the Nucleophile.

The protein belongs to the class I-like SAM-binding methyltransferase superfamily. RsmB/NOP family.

The protein localises to the cytoplasm. It carries out the reaction cytidine(967) in 16S rRNA + S-adenosyl-L-methionine = 5-methylcytidine(967) in 16S rRNA + S-adenosyl-L-homocysteine + H(+). Its function is as follows. Specifically methylates the cytosine at position 967 (m5C967) of 16S rRNA. This chain is Ribosomal RNA small subunit methyltransferase B, found in Shigella flexneri serotype 5b (strain 8401).